Reading from the N-terminus, the 246-residue chain is Probable transcriptional regulatory protein PM0980 (246 aa).

It belongs to the TACO1 family.

It localises to the cytoplasm. This is Probable transcriptional regulatory protein PM0980 from Pasteurella multocida (strain Pm70).